Here is a 595-residue protein sequence, read N- to C-terminus: MKNIRNFCIIAHIDHGKSTLADRLLEYTNTVSGKDLQDQVLDNMDLERERGITIKSHAIQMDYEMDGEKYVLNLIDTPGHVDFSYEVSRSIAACEGALLIVDAAQGIQAQTISNLYMAIENDLTIIPIVNKVDLPSAMPEEVEDQIIELLGCDRSEIIRASGKTGQGVDQILRAIVEQVPAPAGDPDAPLQCLIFDSVFNPFRGIIAYFKVVNGSIRKGDHVKFIATEKEYDADEVGVLRLDMEPRSEVKTGDVGYIISGIKTSREVKVGDTITHVAKPAKEAIAGFEEVKPMVFAGVYPIEAEDFENLRTSLEKLQLNDASLTFQPESSVALGFGFRCGFLGLLHMEIVQERLDREFNMNVITTVPNVSYKVYDKKGGCKEVHNPSGLPEPTLIDHIEEPFIRASVITNTAYIGPIMTLCLGKRGVLVKQEYISGDRVEIFYDLPLGEIVIDFYDKLKSISKGYASFDYHLHDFRESKLVKLDILLNGEPVDALSTLTHVDNSVTFGQRMCEKLKELIPRQQFEIAIQAAIGAKIIARETIKPVRKDVTAKCYGGDISRKRKLLEKQKEGKKRMKQIGTVEVPQKAFLAVLKLD.

The tr-type G domain occupies 2–183 (KNIRNFCIIA…AIVEQVPAPA (182 aa)). GTP is bound by residues 14–19 (DHGKST) and 130–133 (NKVD).

This sequence belongs to the TRAFAC class translation factor GTPase superfamily. Classic translation factor GTPase family. LepA subfamily.

It localises to the cell inner membrane. It carries out the reaction GTP + H2O = GDP + phosphate + H(+). Required for accurate and efficient protein synthesis under certain stress conditions. May act as a fidelity factor of the translation reaction, by catalyzing a one-codon backward translocation of tRNAs on improperly translocated ribosomes. Back-translocation proceeds from a post-translocation (POST) complex to a pre-translocation (PRE) complex, thus giving elongation factor G a second chance to translocate the tRNAs correctly. Binds to ribosomes in a GTP-dependent manner. This is Elongation factor 4 from Porphyromonas gingivalis (strain ATCC 33277 / DSM 20709 / CIP 103683 / JCM 12257 / NCTC 11834 / 2561).